The sequence spans 315 residues: 1,2-dihydroxy-3,5-cyclohexadiene-1,4-dicarboxylate dehydrogenase (315 aa).

Positions 159, 203, and 255 each coordinate a divalent metal cation.

It belongs to the PdxA family.

The catalysed reaction is (3S,4R)-3,4-dihydroxycyclohexa-1,5-diene-1,4-dicarboxylate + NAD(+) = 3,4-dihydroxybenzoate + CO2 + NADH. In terms of biological role, involved in the degradation of terephthalate (TPA) via the protocatechuate (PCA) 4,5-cleavage pathway. Catalyzes the dehydrogenation of 1,2-dihydroxy-3,5-cyclohexadiene-1,4-dicarboxylate (DCD) to yield protocatechuate (PCA). The sequence is that of 1,2-dihydroxy-3,5-cyclohexadiene-1,4-dicarboxylate dehydrogenase (tphBI) from Comamonas sp.